Reading from the N-terminus, the 593-residue chain is Aspartate--tRNA ligase (593 aa).

Glu-173 serves as a coordination point for L-aspartate. The aspartate stretch occupies residues 197–200 (QLFK). Arg-219 serves as a coordination point for L-aspartate. Residues 219–221 (RDE) and Gln-228 contribute to the ATP site. Residue His-449 coordinates L-aspartate. Glu-483 contacts ATP. Arg-490 contacts L-aspartate. 535-538 (GLDR) provides a ligand contact to ATP.

The protein belongs to the class-II aminoacyl-tRNA synthetase family. Type 1 subfamily. As to quaternary structure, homodimer.

The protein resides in the cytoplasm. It carries out the reaction tRNA(Asp) + L-aspartate + ATP = L-aspartyl-tRNA(Asp) + AMP + diphosphate. Functionally, catalyzes the attachment of L-aspartate to tRNA(Asp) in a two-step reaction: L-aspartate is first activated by ATP to form Asp-AMP and then transferred to the acceptor end of tRNA(Asp). The protein is Aspartate--tRNA ligase of Shewanella piezotolerans (strain WP3 / JCM 13877).